A 72-amino-acid polypeptide reads, in one-letter code: DNA gyrase inhibitor YacG (72 aa).

Residues Cys14, Cys17, Cys33, and Cys37 each contribute to the Zn(2+) site.

This sequence belongs to the DNA gyrase inhibitor YacG family. Interacts with GyrB. It depends on Zn(2+) as a cofactor.

Inhibits all the catalytic activities of DNA gyrase by preventing its interaction with DNA. Acts by binding directly to the C-terminal domain of GyrB, which probably disrupts DNA binding by the gyrase. The polypeptide is DNA gyrase inhibitor YacG (Mannheimia succiniciproducens (strain KCTC 0769BP / MBEL55E)).